The chain runs to 260 residues: MAKEWGYASHNGPDHWHELYPIAKGDNQSPIELHTKDIKHDPSLQPWSASYDPGSAKTILNNGKTCRVVFDDTYDRSMLRGGPLSGPYRLRQFHLHWGSSDDHGSEHTVDGVKYAAELHLVHWNPKYNTFGEALKQPDGIAVVGIFLKIGREKGEFQILLDALDKIKTKGKEAPFTHFDPSCLFPACRDYWTYHGSFTTPPCEECIVWLLLKEPMTVSSDQMAKLRSLFSSAENEPPVPLVGNWRPPQPVKGRVVRASFK.

Ala2 carries the N-acetylalanine modification. The 257-residue stretch at 3-259 folds into the Alpha-carbonic anhydrase domain; the sequence is KEWGYASHNG…VKGRVVRASF (257 aa). Phosphoserine occurs at positions 29, 43, 48, 50, and 55. Residues 64-67 form an involved in proton transfer region; that stretch reads KTCR. Thr73 carries the post-translational modification Phosphothreonine. His94, His96, and His119 together coordinate Zn(2+). Tyr127 is modified (phosphotyrosine). A phosphothreonine mark is found at Thr129 and Thr176. An S-glutathionyl cysteine mark is found at Cys182 and Cys187. Residue 198 to 199 participates in substrate binding; the sequence is TT. Thr216 carries the phosphothreonine modification. The residue at position 219 (Ser219) is a Phosphoserine.

It belongs to the alpha-carbonic anhydrase family. Requires Zn(2+) as cofactor. Post-translationally, S-thiolated both by thiol-disulfide exchange with glutathione disulfide and by oxyradical-initiated S-thiolation with reduced glutathione. S-glutathionylated in hepatocytes under oxidative stress. Expressed at lower levels in adipose tissue from animals that were either genetically obese or had experimentally induced obesity.

The protein resides in the cytoplasm. The enzyme catalyses hydrogencarbonate + H(+) = CO2 + H2O. With respect to regulation, inhibited by acetazolamide. In terms of biological role, reversible hydration of carbon dioxide. In Mus musculus (Mouse), this protein is Carbonic anhydrase 3.